Consider the following 508-residue polypeptide: Photosystem II CP47 reaction center protein (508 aa).

Helical transmembrane passes span 21 to 36 (AVHI…WAGS), 101 to 115 (IVFS…IWHW), 140 to 156 (GIHL…FGAF), 203 to 218 (IAAG…FHLS), 237 to 252 (VLSS…AFVV), and 457 to 472 (TFAL…HGAR).

It belongs to the PsbB/PsbC family. PsbB subfamily. As to quaternary structure, PSII is composed of 1 copy each of membrane proteins PsbA, PsbB, PsbC, PsbD, PsbE, PsbF, PsbH, PsbI, PsbJ, PsbK, PsbL, PsbM, PsbT, PsbX, PsbY, PsbZ, Psb30/Ycf12, at least 3 peripheral proteins of the oxygen-evolving complex and a large number of cofactors. It forms dimeric complexes. The cofactor is Binds multiple chlorophylls. PSII binds additional chlorophylls, carotenoids and specific lipids..

Its subcellular location is the plastid. The protein localises to the chloroplast thylakoid membrane. In terms of biological role, one of the components of the core complex of photosystem II (PSII). It binds chlorophyll and helps catalyze the primary light-induced photochemical processes of PSII. PSII is a light-driven water:plastoquinone oxidoreductase, using light energy to abstract electrons from H(2)O, generating O(2) and a proton gradient subsequently used for ATP formation. The protein is Photosystem II CP47 reaction center protein of Secale cereale (Rye).